Here is a 378-residue protein sequence, read N- to C-terminus: O-methyltransferase dpfgI (378 aa).

S-adenosyl-L-methionine-binding positions include 232-233 (GG), Asp-257, 279-280 (NF), and Arg-295. The active-site Proton acceptor is His-299.

Belongs to the class I-like SAM-binding methyltransferase superfamily. Cation-independent O-methyltransferase family.

It functions in the pathway secondary metabolite biosynthesis; terpenoid biosynthesis. Its function is as follows. O-methyltransferase; part of the gene cluster that mediates the biosynthesis of diterpenoid pyrones. The first step of the pathway is the synthesis of the alpha-pyrone moiety by the polyketide synthase dpfgA via condensation of one acetyl-CoA starter unit with 3 malonyl-CoA units and 2 methylations. The alpha-pyrone is then combined with geranylgeranyl pyrophosphate (GGPP) formed by the GGPP synthase dpfgD through the action of the prenyltransferase dpfgC to yield a linear alpha-pyrone diterpenoid. Subsequent steps in the diterpenoid pyrone biosynthetic pathway involve the decalin core formation, which is initiated by the epoxidation of the C10-C11 olefin by the FAD-dependent oxidoreductase dpfgE, and is followed by a cyclization cascade catalyzed by the terpene cyclase dpfgB. The short chain dehydrogenase/reductase dpfgG then oxidizes the 8S hydroxy group to a ketone and the short chain dehydrogenase/reductase dpfgH reduces the ketone to the 8R hydroxy group to yield higginsianin B. Higginsianin B is further methylated by the methyltransferase dpfgI to produce the intermediate named FDDP B. The cytochrome P450 monooxygenase dfgpJ then catalyzes a three-step oxidation at C-27 to generate a carboxylic acid as well as C-26 hydroxylation. Finally, methyltransferase dpfgK methylates the carboxylic acid generated by dpfgJ, yielding the final diterpenoid pyrones from the pathway which were named FDDP D and FDDP E. The protein is O-methyltransferase dpfgI of Gibberella zeae (strain ATCC MYA-4620 / CBS 123657 / FGSC 9075 / NRRL 31084 / PH-1) (Wheat head blight fungus).